A 626-amino-acid polypeptide reads, in one-letter code: UvrABC system protein C (626 aa).

The 80-residue stretch at 25 to 104 (TSPGVYRFSN…IKELKPRYNV (80 aa)) folds into the GIY-YIG domain. Residues 218-253 (SALLRDLSAEMQKKAKELKFEEAAALKAQIEGLKRY) form the UVR domain.

Belongs to the UvrC family. In terms of assembly, interacts with UvrB in an incision complex.

The protein localises to the cytoplasm. Its function is as follows. The UvrABC repair system catalyzes the recognition and processing of DNA lesions. UvrC both incises the 5' and 3' sides of the lesion. The N-terminal half is responsible for the 3' incision and the C-terminal half is responsible for the 5' incision. In Chlorobaculum tepidum (strain ATCC 49652 / DSM 12025 / NBRC 103806 / TLS) (Chlorobium tepidum), this protein is UvrABC system protein C.